Here is a 345-residue protein sequence, read N- to C-terminus: MIKVGIVGGTGYTGVELLRLLATHPEVKLTAITSRKEDGLPVADMFPSLRGRVDLAFSAPEKAKLTECDVVFFATPHGVAMAQAPELLAAGVKVIDLAADFRLQDIAAFEKWYKIPHSCPELLKEAAYGLVELNRDAIRKARIVGNPGCYPTTMQLGLAPLLQAGVIDASHLIADCKSGVSGAGRKAEVATLFSEAGDNFKAYGVSGHRHSPETLERLRLLTKDKVGLLFTPHLVPMIRGMHSTLYARLTKDIDNAALQALFEKAYGNEPFIDVMPFGSHPETRSTRASNMLRIALHRPDDGDTVVVLVVQDNLVKGASGQAVQCMNLMFGLDETAGLMHIPVLP.

Residue Cys-149 is part of the active site.

Belongs to the NAGSA dehydrogenase family. Type 1 subfamily.

It localises to the cytoplasm. The enzyme catalyses N-acetyl-L-glutamate 5-semialdehyde + phosphate + NADP(+) = N-acetyl-L-glutamyl 5-phosphate + NADPH + H(+). Its pathway is amino-acid biosynthesis; L-arginine biosynthesis; N(2)-acetyl-L-ornithine from L-glutamate: step 3/4. Functionally, catalyzes the NADPH-dependent reduction of N-acetyl-5-glutamyl phosphate to yield N-acetyl-L-glutamate 5-semialdehyde. This is N-acetyl-gamma-glutamyl-phosphate reductase from Janthinobacterium sp. (strain Marseille) (Minibacterium massiliensis).